Reading from the N-terminus, the 330-residue chain is Zinc finger Ran-binding domain-containing protein 2 (330 aa).

At Ser9 the chain carries Phosphoserine. The RanBP2-type 1 zinc finger occupies 9-40 (SDGDWICPDKKCGNVNFARRTSCNRCGREKTT). Lys18, Lys54, and Lys92 each carry N6-acetyllysine. Residues 65-94 (SANDWQCKTCSNVNWARRSECNMCNTPKYA) form a RanBP2-type 2 zinc finger. The segment at 117-330 (REESDGEYDE…SGSRSSSKKK (214 aa)) is disordered. Phosphoserine occurs at positions 120, 153, 181, 188, and 193. Residues 150 to 163 (DKESEGEEEDEDED) show a composition bias toward acidic residues. Residues 151–324 (KESEGEEEDE…SSGSSHSGSR (174 aa)) form a required for nuclear targeting region. The span at 196-210 (KKSNRRSRSKSRSSH) shows a compositional bias: basic residues. Composition is skewed to low complexity over residues 211 to 224 (SRSS…SSSR) and 232 to 242 (RSSSSSQSRSR). Basic residues-rich tracts occupy residues 251–273 (SRGS…RKRS) and 298–314 (RKKR…RHRS). Position 303 is a phosphothreonine (Thr303). Ser305, Ser307, and Arg310 each carry phosphoserine. Residues 315-330 (SSGSSHSGSRSSSKKK) show a composition bias toward low complexity.

Belongs to the ZRANB2 family. In terms of assembly, interacts with the C-terminal half of SNRNP70, the Arg/Ser-rich domain of AKAP17A as well as with U2AF1 and CLK1. Isoform 2 is phosphorylated on Ser-310 upon DNA damage, probably by ATM or ATR.

Its subcellular location is the nucleus. Functionally, splice factor required for alternative splicing of TRA2B/SFRS10 transcripts. Binds to ssRNA containing the consensus sequence 5'-AGGUAA-3'. May interfere with constitutive 5'-splice site selection. This is Zinc finger Ran-binding domain-containing protein 2 (ZRANB2) from Homo sapiens (Human).